The primary structure comprises 230 residues: Endonuclease NucS (230 aa).

This sequence belongs to the NucS endonuclease family.

The protein localises to the cytoplasm. Its function is as follows. Cleaves both 3' and 5' ssDNA extremities of branched DNA structures. The chain is Endonuclease NucS from Corynebacterium glutamicum (strain ATCC 13032 / DSM 20300 / JCM 1318 / BCRC 11384 / CCUG 27702 / LMG 3730 / NBRC 12168 / NCIMB 10025 / NRRL B-2784 / 534).